Reading from the N-terminus, the 437-residue chain is Transmembrane protein with metallophosphoesterase domain (437 aa).

5 helical membrane passes run 7–27 (LSAE…MLIS), 41–61 (ALLF…LGSL), 87–107 (IIVL…FFLV), 116–136 (LLSF…FVFG), and 164–184 (VLAL…AAQP). A divalent metal cation-binding residues include D211, H213, D243, N274, H376, and H378.

The protein belongs to the metallophosphoesterase superfamily. LOC643853 family. It depends on a divalent metal cation as a cofactor.

It localises to the membrane. This Danio rerio (Zebrafish) protein is Transmembrane protein with metallophosphoesterase domain (tmppe).